Here is a 289-residue protein sequence, read N- to C-terminus: MKLSFTKMHGAGNDFVVLDGYTRALPPLTGAQVRALADRHFGIGADQLLLVEKPTVDGADFKYRIFNCDGGEVEHCGNGARCFVKFVRDHGLTGKASVRVEVKHGVITLTMQDNGEVVVDMGAPVFEPARVPFDASGLDGRREGADTLWPLPVNGVTRWISVVSMGNPHAVQIVDDAEAFAVRVDGPAIECDPRFPQRVNAGFMQIVSRHEVNLRVYERGAGETLACGTGACAAVAAGIRRGRLDSPVTVHTHGGTLTISWNGACDERAPLMMAGPATTVFEGVIELPA.

Residues Asn13, Gln47, and Asn67 each coordinate substrate. The Proton donor role is filled by Cys76. Residues 77-78, Asn167, Asn200, and 218-219 contribute to the substrate site; these read GN and ER. The Proton acceptor role is filled by Cys227. 228-229 contacts substrate; it reads GT.

It belongs to the diaminopimelate epimerase family. As to quaternary structure, homodimer.

Its subcellular location is the cytoplasm. It catalyses the reaction (2S,6S)-2,6-diaminopimelate = meso-2,6-diaminopimelate. It functions in the pathway amino-acid biosynthesis; L-lysine biosynthesis via DAP pathway; DL-2,6-diaminopimelate from LL-2,6-diaminopimelate: step 1/1. Functionally, catalyzes the stereoinversion of LL-2,6-diaminopimelate (L,L-DAP) to meso-diaminopimelate (meso-DAP), a precursor of L-lysine and an essential component of the bacterial peptidoglycan. This chain is Diaminopimelate epimerase, found in Burkholderia pseudomallei (strain K96243).